A 491-amino-acid polypeptide reads, in one-letter code: Glutamyl-tRNA(Gln) amidotransferase subunit A (491 aa).

Residues K77 and S152 each act as charge relay system in the active site. S176 acts as the Acyl-ester intermediate in catalysis.

The protein belongs to the amidase family. GatA subfamily. Heterotrimer of A, B and C subunits.

It catalyses the reaction L-glutamyl-tRNA(Gln) + L-glutamine + ATP + H2O = L-glutaminyl-tRNA(Gln) + L-glutamate + ADP + phosphate + H(+). Allows the formation of correctly charged Gln-tRNA(Gln) through the transamidation of misacylated Glu-tRNA(Gln) in organisms which lack glutaminyl-tRNA synthetase. The reaction takes place in the presence of glutamine and ATP through an activated gamma-phospho-Glu-tRNA(Gln). The sequence is that of Glutamyl-tRNA(Gln) amidotransferase subunit A from Chlamydia abortus (strain DSM 27085 / S26/3) (Chlamydophila abortus).